The chain runs to 325 residues: MKVFRRAWRHRVALGLGGLAFCGTTLLYLARCASEGETPSASGAARPRAKAFLAVLVASAPRAVERRTAVRSTWLAPERRGGPEDVWARFAVGTGGLGSEERRALELEQAQHGDLLLLPALRDAYENLTAKVLAMLTWLDERVDFEFVLKADDDSFARLDAILVDLRAREPARRRRLYWGFFSGRGRVKPGGRWREAAWQLCDYYLPYALGGGYVLSADLVHYLRLSREYLRAWHSEDVSLGTWLAPVDVQREHDPRFDTEYKSRGCNNQYLVTHKQSPEDMLEKQQMLLHEGRLCKHEVQLRLSYVYDWSAPPSQCCQRKEGVP.

Residues 1–11 (MKVFRRAWRHR) lie on the Cytoplasmic side of the membrane. Residues 12 to 30 (VALGLGGLAFCGTTLLYLA) traverse the membrane as a helical; Signal-anchor for type II membrane protein segment. At 31–325 (RCASEGETPS…QCCQRKEGVP (295 aa)) the chain is on the lumenal side. An N-linked (GlcNAc...) asparagine glycan is attached at Asn127.

It belongs to the glycosyltransferase 31 family. Requires Mn(2+) as cofactor.

The protein resides in the golgi apparatus. It is found in the golgi stack membrane. The catalysed reaction is 3-O-(beta-D-galactosyl-(1-&gt;4)-beta-D-xylosyl)-L-seryl-[protein] + UDP-alpha-D-galactose = 3-O-(beta-D-galactosyl-(1-&gt;3)-beta-D-galactosyl-(1-&gt;4)-beta-D-xylosyl)-L-seryl-[protein] + UDP + H(+). The protein operates within glycan metabolism; chondroitin sulfate biosynthesis. It participates in glycan metabolism; heparan sulfate biosynthesis. Its function is as follows. Beta-1,3-galactosyltransferase that transfers galactose from UDP-galactose to substrates with a terminal beta-linked galactose residue. Has a preference for galactose-beta-1,4-xylose that is found in the linker region of glycosaminoglycans, such as heparan sulfate and chondroitin sulfate. Has no activity towards substrates with terminal glucosamine or galactosamine residues. The sequence is that of Beta-1,3-galactosyltransferase 6 (B3galt6) from Mus musculus (Mouse).